The chain runs to 494 residues: Prenylcysteine oxidase 1-like (494 aa).

The signal sequence occupies residues 1–22 (MARAAPLLAALTALLAAAAAGG). Residue asparagine 342 is glycosylated (N-linked (GlcNAc...) asparagine).

This sequence belongs to the prenylcysteine oxidase family. The cofactor is FAD.

Its subcellular location is the secreted. In terms of biological role, likely to have oxidoreductase activity. Required in the mevalonate pathway to regulate prenylation and enhances the bactericidal activity of neutrophils. This chain is Prenylcysteine oxidase 1-like (PCYOX1L), found in Homo sapiens (Human).